The following is a 402-amino-acid chain: Argininosuccinate synthase (402 aa).

ATP-binding positions include Ala10–Ser18 and Ala38. An L-citrulline-binding site is contributed by Tyr89. Position 119 (Gly119) interacts with ATP. L-aspartate contacts are provided by Thr121, Asn125, and Asp126. An L-citrulline-binding site is contributed by Asn125. L-citrulline contacts are provided by Arg129, Ser177, Ser186, Glu262, and Tyr274.

This sequence belongs to the argininosuccinate synthase family. Type 1 subfamily. In terms of assembly, homotetramer.

It is found in the cytoplasm. It catalyses the reaction L-citrulline + L-aspartate + ATP = 2-(N(omega)-L-arginino)succinate + AMP + diphosphate + H(+). Its pathway is amino-acid biosynthesis; L-arginine biosynthesis; L-arginine from L-ornithine and carbamoyl phosphate: step 2/3. In Prochlorococcus marinus (strain SARG / CCMP1375 / SS120), this protein is Argininosuccinate synthase.